A 448-amino-acid chain; its full sequence is uncharacterized protein (448 aa).

Helical transmembrane passes span P14–I34, T59–A79, V87–N107, G120–A140, G148–V168, S171–L191, I250–T270, L288–V308, I316–I333, T338–F358, F392–F412, and F417–A437.

It belongs to the major facilitator superfamily. TCR/Tet family.

Its subcellular location is the endoplasmic reticulum. The protein resides in the membrane. This is an uncharacterized protein from Schizosaccharomyces pombe (strain 972 / ATCC 24843) (Fission yeast).